An 85-amino-acid polypeptide reads, in one-letter code: ATP synthase subunit c (85 aa).

A run of 2 helical transmembrane segments spans residues 20–40 (LGAG…GNIF) and 65–85 (FALT…ILFA).

This sequence belongs to the ATPase C chain family. As to quaternary structure, F-type ATPases have 2 components, F(1) - the catalytic core - and F(0) - the membrane proton channel. F(1) has five subunits: alpha(3), beta(3), gamma(1), delta(1), epsilon(1). F(0) has three main subunits: a(1), b(2) and c(10-14). The alpha and beta chains form an alternating ring which encloses part of the gamma chain. F(1) is attached to F(0) by a central stalk formed by the gamma and epsilon chains, while a peripheral stalk is formed by the delta and b chains.

The protein resides in the cell inner membrane. Its function is as follows. F(1)F(0) ATP synthase produces ATP from ADP in the presence of a proton or sodium gradient. F-type ATPases consist of two structural domains, F(1) containing the extramembraneous catalytic core and F(0) containing the membrane proton channel, linked together by a central stalk and a peripheral stalk. During catalysis, ATP synthesis in the catalytic domain of F(1) is coupled via a rotary mechanism of the central stalk subunits to proton translocation. Functionally, key component of the F(0) channel; it plays a direct role in translocation across the membrane. A homomeric c-ring of between 10-14 subunits forms the central stalk rotor element with the F(1) delta and epsilon subunits. The polypeptide is ATP synthase subunit c (Gluconobacter oxydans (strain 621H) (Gluconobacter suboxydans)).